The sequence spans 498 residues: Myocyte-specific enhancer factor 2A (498 aa).

The MADS-box domain occupies 3-57 (RKKIQITRIMDERNRQVTFTKRKFGLMKKAYELSVLCDCEIALIIFNSSNKLFQY). Residues 58 to 86 (ASTDMDKVLLKYTEYNEPHESRTNSDIVE) constitute a DNA-binding region (mef2-type). Residue serine 59 is modified to Phosphoserine; by CK2. A phosphoserine mark is found at serine 98 and serine 108. Serine 108 is subject to Phosphothreonine. The interval 172-220 (LADSSMLSPPPATLHRNVSPGAPQRPPSTGSASGMLSTTDLTVPNGAGN) is disordered. The segment covering 198-220 (PSTGSASGMLSTTDLTVPNGAGN) has biased composition (polar residues). Serine 233 bears the Phosphoserine mark. The segment at 240-268 (TGANSLGKVMPTKSPPPPGGGSLGMNSRK) is disordered. The residue at position 247 (lysine 247) is an N6-acetyllysine. The residue at position 253 (serine 253) is a Phosphoserine. A required for interaction with MAPKs region spans residues 264 to 281 (MNSRKPDLRVVIPPSSKG). The interval 287–294 (SEEEELEL) is beta domain. Phosphothreonine; by MAPK7 occurs at positions 310 and 317. Threonine 310 carries the post-translational modification Phosphothreonine; by NLK. The residue at position 353 (serine 353) is a Phosphoserine; by MAPK7. Positions 388–400 (SNLSINTNQNINI) are enriched in polar residues. The tract at residues 388–498 (SNLSINTNQN…KRMRMDTWVT (111 aa)) is disordered. Lysine 401 is modified (N6-acetyllysine; alternate). Lysine 401 is covalently cross-linked (Glycyl lysine isopeptide (Lys-Gly) (interchain with G-Cter in SUMO); alternate). Serine 406 is modified (phosphoserine). Threonine 413 carries the phosphothreonine modification. Positions 426–436 (QQPPPQPPQPQ) are enriched in pro residues. Residue serine 444 is modified to Phosphoserine. The span at 444–457 (SPVDSLSSSSSSYD) shows a compositional bias: low complexity. Composition is skewed to basic and acidic residues over residues 458–468 (GSDREDPRGDF) and 479–498 (NTED…TWVT).

This sequence belongs to the MEF2 family. Binds DNA as a homo- or heterodimer. Dimerizes with MEF2D. Interacts with HDAC7. Interacts with PIAS1; the interaction enhances sumoylation. Interacts with HDAC4, HDAC9 and SLC2A4RG. Interacts (via the N-terminal) with MAPK7; the interaction results in the phosphorylation and transcriptional activity of MEF2A. Post-translationally, constitutive phosphorylation on Ser-406 promotes Lys-401 sumoylation thus preventing acetylation at this site. Dephosphorylation on Ser-406 by PPP3CA upon neuron depolarization promotes a switch from sumoylation to acetylation on residue Lys-403 leading to inhibition of dendrite claw differentiation. Phosphorylation on Thr-312 and Thr-319 are the main sites involved in p38 MAPK signaling and activate transcription. Phosphorylated on these sites by MAPK14/p38alpha and MAPK11/p38beta, but not by MAPK13/p38delta nor by MAPK12/p38gamma. Phosphorylation on Ser-408 by CDK5 induced by neurotoxicity inhibits MEF2A transcriptional activation leading to apoptosis of cortical neurons. Phosphorylation on Thr-312, Thr-319 and Ser-355 can be induced by EGF. Isoform 3 is phosphorylated on Ser-98 and Thr-108. In terms of processing, sumoylation on Lys-401 is enhanced by PIAS1 and represses transcriptional activity. Phosphorylation on Ser-406 is required for sumoylation. Has no effect on nuclear location nor on DNA binding. Sumoylated with SUMO1 and, to a lesser extent with SUMO2 and SUMO3. PIASx facilitates sumoylation in postsynaptic dendrites in the cerebellar cortex and promotes their morphogenesis. Acetylation on Lys-401 activates transcriptional activity. Acetylated by p300 on several sites in diffentiating myocytes. Acetylation on Lys-4 increases DNA binding and transactivation. Hyperacetylation by p300 leads to enhanced cardiac myocyte growth and heart failure. Post-translationally, proteolytically cleaved in cerebellar granule neurons on several sites by caspase 3 and caspase 7 following neurotoxicity. Preferentially cleaves the CDK5-mediated hyperphosphorylated form which leads to neuron apoptosis and transcriptional inactivation. In terms of tissue distribution, widely expressed though mainly restricted to skeletal and cardiac muscle, brain, neurons and lymphocytes. Differentially expressed depending on if isoforms contain the beta domain or not, with the total expression of the beta domain-lacking isoforms vastly exceeding that of the beta domain-containing isoforms. Isoforms containing the beta domain are expressed primarily in skeletal and cardiac muscle and in brain. Also present in lung and testis. Splicing to include the beta domain is induced in differentiating myocytes. Isoforms lacking the beta domain are expressed less abundantly in skeletal muscle, brain and lymphocytes, and are uniquely found in ovary, liver, spleen and kidney. In embryos, the beta domain-containing and beta domain-lacking isoforms are equally expressed. Also expressed cerebellar granule neurons and other regions of the CNS. Highest levels in the olfactory bulb, cortex, hippocampus, thalamus and cerebellum.

Its subcellular location is the nucleus. In terms of biological role, transcriptional activator which binds specifically to the MEF2 element, 5'-YTA[AT](4)TAR-3', found in numerous muscle-specific genes. Also involved in the activation of numerous growth factor- and stress-induced genes. Mediates cellular functions not only in skeletal and cardiac muscle development, but also in neuronal differentiation and survival. Plays diverse roles in the control of cell growth, survival and apoptosis via p38 MAPK signaling in muscle-specific and/or growth factor-related transcription. In cerebellar granule neurons, phosphorylated and sumoylated MEF2A represses transcription of NUR77 promoting synaptic differentiation. Associates with chromatin to the ZNF16 promoter. The polypeptide is Myocyte-specific enhancer factor 2A (Mef2a) (Mus musculus (Mouse)).